Here is a 595-residue protein sequence, read N- to C-terminus: MFS-type transporter phomT (595 aa).

The segment covering 1–11 (MESDGKSDRTK) has biased composition (basic and acidic residues). Residues 1-62 (MESDGKSDRT…HVSADDGPVD (62 aa)) are disordered. Over residues 30-48 (PGHSTDTEGNGSDNNNTQV) the composition is skewed to polar residues. Residues Asn-39 and Asn-44 are each glycosylated (N-linked (GlcNAc...) asparagine). 3 consecutive transmembrane segments (helical) span residues 91 to 111 (IILL…TIVA), 126 to 146 (DVGW…LFFG), and 156 to 176 (WVFL…GVAP). N-linked (GlcNAc...) asparagine glycosylation occurs at Asn-177. 3 helical membrane passes run 186–206 (AVAG…IAFS), 217–237 (ALIS…GGVF), and 245–265 (WCFY…VFFL). The N-linked (GlcNAc...) asparagine glycan is linked to Asn-277. Transmembrane regions (helical) follow at residues 290–310 (IGTA…QWGG), 320–340 (VVAL…LQFW), 362–382 (VFTG…PIWF), 409–429 (IVGG…YALP), 451–471 (WIGY…QGIV), 483–503 (AIGT…FVSV), and 559–579 (VIWT…AVIF).

Belongs to the major facilitator superfamily. TCR/Tet family.

The protein resides in the cell membrane. In terms of biological role, MFS-type transporter; part of the gene cluster that mediates the biosynthesis of the phomopsins, a group of hexapeptide mycotoxins which infects lupins and causes lupinosis disease in livestock. PhomT is likely to be involved in the cellular export of phomopsins. The protein is MFS-type transporter phomT of Diaporthe leptostromiformis (Lupinosis disease fungus).